The primary structure comprises 257 residues: Methylthioribulose-1-phosphate dehydratase (257 aa).

The segment at 1 to 33 (MVSSQEKMASISDIIQKDEDSGSEKTESQDKEH) is disordered. Positions 15 to 33 (IQKDEDSGSEKTESQDKEH) are enriched in basic and acidic residues. Cysteine 107 provides a ligand contact to substrate. Histidine 125 and histidine 127 together coordinate Zn(2+). Residue glutamate 149 is the Proton donor/acceptor of the active site. Histidine 205 provides a ligand contact to Zn(2+).

The protein belongs to the aldolase class II family. MtnB subfamily. Zn(2+) is required as a cofactor.

It is found in the cytoplasm. The enzyme catalyses 5-(methylsulfanyl)-D-ribulose 1-phosphate = 5-methylsulfanyl-2,3-dioxopentyl phosphate + H2O. It functions in the pathway amino-acid biosynthesis; L-methionine biosynthesis via salvage pathway; L-methionine from S-methyl-5-thio-alpha-D-ribose 1-phosphate: step 2/6. Its function is as follows. Catalyzes the dehydration of methylthioribulose-1-phosphate (MTRu-1-P) into 2,3-diketo-5-methylthiopentyl-1-phosphate (DK-MTP-1-P). Functions in the methionine salvage pathway. May play a role in apoptosis. This Esox lucius (Northern pike) protein is Methylthioribulose-1-phosphate dehydratase.